The primary structure comprises 124 residues: Small ribosomal subunit protein uS13 (124 aa).

The segment at 95–124 (GLPVRGQRTKTNARTRKGPKRTIAGKKKAR) is disordered.

Belongs to the universal ribosomal protein uS13 family. Part of the 30S ribosomal subunit. Forms a loose heterodimer with protein S19. Forms two bridges to the 50S subunit in the 70S ribosome.

Its function is as follows. Located at the top of the head of the 30S subunit, it contacts several helices of the 16S rRNA. In the 70S ribosome it contacts the 23S rRNA (bridge B1a) and protein L5 of the 50S subunit (bridge B1b), connecting the 2 subunits; these bridges are implicated in subunit movement. Contacts the tRNAs in the A and P-sites. This chain is Small ribosomal subunit protein uS13, found in Mycolicibacterium smegmatis (strain ATCC 700084 / mc(2)155) (Mycobacterium smegmatis).